The sequence spans 306 residues: Armadillo repeat-containing protein 10 (306 aa).

The chain crosses the membrane as a helical span at residues 7–29 (VGWVAAGLVLGAGACYCIYRLTR). Position 43 is a phosphoserine (Ser-43). Thr-48 carries the phosphothreonine modification. The ARM repeat unit spans residues 101–143 (GGIPIVGSKINSLNQSIKEKALNALNNLSVNVENQTKIKIYVR).

In terms of assembly, interacts with the DNA-binding domain of p53/TP53.

The protein localises to the endoplasmic reticulum membrane. It localises to the mitochondrion outer membrane. May play a role in cell survival and cell growth. May suppress the transcriptional activity of p53/TP53. This Rattus norvegicus (Rat) protein is Armadillo repeat-containing protein 10 (Armc10).